The following is a 210-amino-acid chain: Large ribosomal subunit protein uL3 (210 aa).

Residues 125-154 (RHGFRGGPKTHGQSDRHRAPGSIGAGTTPG) form a disordered region.

The protein belongs to the universal ribosomal protein uL3 family. In terms of assembly, part of the 50S ribosomal subunit. Forms a cluster with proteins L14 and L19.

One of the primary rRNA binding proteins, it binds directly near the 3'-end of the 23S rRNA, where it nucleates assembly of the 50S subunit. The polypeptide is Large ribosomal subunit protein uL3 (Chloroflexus aggregans (strain MD-66 / DSM 9485)).